The sequence spans 789 residues: DEAD-box ATP-dependent RNA helicase 28 (789 aa).

A disordered region spans residues 1–152; it reads MPSSFFFEDA…AEYKPEDATP (152 aa). Residues 13-66 are a coiled coil; the sequence is DELELIRNQEDSSEEDVKEGEAEEHEAGEDEDGEEEYEEEDDDEEEEDEKRKRD. Over residues 23 to 60 the composition is skewed to acidic residues; that stretch reads DSSEEDVKEGEAEEHEAGEDEDGEEEYEEEDDDEEEED. The span at 83 to 99 shows a compositional bias: basic and acidic residues; the sequence is GEEHARRHTTSIDEKIS. Residues 110–135 are a coiled coil; that stretch reads SINEEEEEEEEEEDASDAETDKQEEY. Positions 112–127 are enriched in acidic residues; sequence NEEEEEEEEEEDASDA. The Q motif signature appears at 167 to 195; that stretch reads DTFMELNLSRPLLRACETLGYKKPTPIQA. The region spanning 198-372 is the Helicase ATP-binding domain; sequence IPLALTGRDL…KLSLNKPLRL (175 aa). Residue 211–218 coordinates ATP; sequence AITGSGKT. Positions 320-323 match the DEAD box motif; the sequence is DEAD. The 145-residue stretch at 402–546 folds into the Helicase C-terminal domain; sequence VLLSLCTRTF…SRVIPEQSIV (145 aa). Coiled coils occupy residues 563–591 and 628–677; these read ISAERDERALRKAEMEFAKAENMLEHRDE and SADR…EDEE. Residues 611–789 are disordered; it reads AQAEKDSAGN…FKSKARYKRR (179 aa). Residues 628–637 show a composition bias toward basic and acidic residues; that stretch reads SADRAEDLKM. Residues 638–656 are compositionally biased toward basic residues; it reads KEKRKREREKNLPRKKRRK. A compositionally biased stretch (acidic residues) spans 665 to 678; it reads EDNEGEEEEEDEEG. 3 stretches are compositionally biased toward basic and acidic residues: residues 691–701, 718–734, and 743–761; these read KKQETDKKGLT, RAIDSGKMERPKPDKKQ, and PRGEEMKDLFKSDMGEKKQ. Over residues 772 to 789 the composition is skewed to basic residues; sequence PRTKSKNSFKSKARYKRR.

Belongs to the DEAD box helicase family. DDX27/DRS1 subfamily.

The enzyme catalyses ATP + H2O = ADP + phosphate + H(+). The protein is DEAD-box ATP-dependent RNA helicase 28 (RH28) of Arabidopsis thaliana (Mouse-ear cress).